The following is a 211-amino-acid chain: Glycerol-3-phosphate acyltransferase (211 aa).

5 consecutive transmembrane segments (helical) span residues 10-30 (FTTW…FGLL), 63-83 (ALTL…IKFL), 90-110 (NIFI…PVWL), 126-146 (LGLY…LFLI), and 152-172 (LSAL…YPYL).

Belongs to the PlsY family. As to quaternary structure, probably interacts with PlsX.

Its subcellular location is the cell inner membrane. The catalysed reaction is an acyl phosphate + sn-glycerol 3-phosphate = a 1-acyl-sn-glycero-3-phosphate + phosphate. The protein operates within lipid metabolism; phospholipid metabolism. Catalyzes the transfer of an acyl group from acyl-phosphate (acyl-PO(4)) to glycerol-3-phosphate (G3P) to form lysophosphatidic acid (LPA). This enzyme utilizes acyl-phosphate as fatty acyl donor, but not acyl-CoA or acyl-ACP. The sequence is that of Glycerol-3-phosphate acyltransferase from Bartonella henselae (strain ATCC 49882 / DSM 28221 / CCUG 30454 / Houston 1) (Rochalimaea henselae).